The following is a 421-amino-acid chain: MVSASHPEALAAPVTTVATLVPHNATEPASPGEGKEDAFSKLKQKFMNELHKIPLPPWALIAIAIVAVLLVVTCCFCVCKKCLFKKKNKKKGKEKGGKNAINMKDVKDLGKTMKDQALKDDDAETGLTDGEEKEEPKEEEKLGKLQYSLDYDFQNNQLLVGIIQAAELPALDMGGTSDPYVKVFLLPDKKKKFETKVHRKTLNPVFNEQFTFKVPYSELGGKTLVMAVYDFDRFSKHDIIGEFKVPMNTVDFGHVTEEWRDLQSAEKEEQEKLGDICFSLRYVPTAGKLTVVILEAKNLKKMDVGGLSDPYVKIHLMQNGKRLKKKKTTIKKNTLNPYYNESFSFEVPFEQIQKVQVVVTVLDYDKIGKNDAIGKVFVGYNSTGAELRHWSDMLANPRRPIAQWHTLQVEEEVDAMLAVKK.

The Vesicular segment spans residues Met1–Pro57. N-linked (GlcNAc...) asparagine glycosylation is present at Asn24. The helical transmembrane segment at Trp58–Cys79 threads the bilayer. Residues Cys74, Cys75, Cys77, Cys79, and Cys82 are each lipidated (S-palmitoyl cysteine). Residues Lys80–Lys421 are Cytoplasmic-facing. Positions Thr112 to Lys141 are disordered. Positions Asp121–Lys133 are enriched in acidic residues. Thr128 carries the post-translational modification Phosphothreonine. The interval Glu135–Asn381 is phospholipid binding. The region spanning Lys141 to Arg260 is the C2 1 domain. Ca(2+)-binding residues include Leu171, Asp172, and Asp178. Residue Tyr229 is modified to Phosphotyrosine. Ca(2+) contacts are provided by Asp230, Phe231, Asp232, Ser235, Lys236, and Asp238. At Ser264 the chain carries Phosphoserine. One can recognise a C2 2 domain in the interval Lys272–His405. Residues Asp303 and Asp309 each contribute to the Ca(2+) site. A phosphoserine mark is found at Ser342 and Ser344. Ca(2+) is bound by residues Asp363, Asp365, and Asp371.

It belongs to the synaptotagmin family. In terms of assembly, homotetramer. Heterodimer; heterodimerizes with SYT2 in presence of calcium. Interacts with SCAMP5. Interacts with STON2. Forms a complex with SV2B, syntaxin 1 and SNAP25. Interacts with SV2A, SV2B and SV2C. Interacts with RIMS1. Interacts with PRRT2. Interacts with DNAJC5 in a phosphorylation-dependent manner. Interacts (via N-terminus) with RAB3A. Interacts with SYT12. Interacts with calmodulin. Interacts with DNM1 (via C-terminal proline-rich domain (PRD)); this interaction facilitates vesicle fission during clathrin-mediated endocytosis (CME). As to quaternary structure, (Microbial infection) Interacts with C.botulinum neurotoxin type B (BoNT/B, botB). Has lower affinity for BoNT/B than Syt2; mutating its residues to match those in Syt2 increases its affinity. (Microbial infection) Interacts with C.botulinum neurotoxin type G (BoNT/G, botG). It depends on Ca(2+) as a cofactor. Post-translationally, glycosylated. In terms of tissue distribution, expressed in the brain (at protein level). Predominantly expressed in rostral, phylogenetically younger brain regions, and in some endocrine tissues.

Its subcellular location is the cytoplasmic vesicle. It localises to the secretory vesicle membrane. The protein localises to the secretory vesicle. The protein resides in the synaptic vesicle membrane. It is found in the chromaffin granule membrane. Its subcellular location is the cytoplasm. Functionally, calcium sensor that participates in triggering neurotransmitter release at the synapse. May have a regulatory role in the membrane interactions during trafficking of synaptic vesicles at the active zone of the synapse. It binds acidic phospholipids with a specificity that requires the presence of both an acidic head group and a diacyl backbone. A Ca(2+)-dependent interaction between synaptotagmin and putative receptors for activated protein kinase C has also been reported. It can bind to at least three additional proteins in a Ca(2+)-independent manner; these are neurexins, syntaxin and AP2. Plays a role in dendrite formation by melanocytes. In terms of biological role, (Microbial infection) Receptor for C.botulinum neurotoxin type B (BoNT/B, botB); interaction is improved in the presence of gangliosides. BoNT/B toxin binds to the membrane proximal vesicular domain of Syt1 (residues 32-51). (Microbial infection) Receptor for C.botulinum neurotoxin type G (BoNT/G, botG); unlike the case with BoNT/B, interaction is not improved in the presence of gangliosides. BoNT/G toxin binds to the vesicular domain of Syt1 (residues 32-53). The polypeptide is Synaptotagmin-1 (Rattus norvegicus (Rat)).